A 346-amino-acid chain; its full sequence is Very-long-chain 3-oxoacyl-CoA reductase (346 aa).

A helical transmembrane segment spans residues 26 to 46 (SAYFLLAAGSLFVASRALTFV). The NADP(+) site is built by V71, D126, D134, N153, Y220, K224, I253, and S255. Y220 (proton donor) is an active-site residue. The Lowers pKa of active site Tyr role is filled by K224.

The protein belongs to the short-chain dehydrogenases/reductases (SDR) family.

The protein resides in the endoplasmic reticulum membrane. It catalyses the reaction a very-long-chain (3R)-3-hydroxyacyl-CoA + NADP(+) = a very-long-chain 3-oxoacyl-CoA + NADPH + H(+). It functions in the pathway lipid metabolism; fatty acid biosynthesis. Functionally, component of the microsomal membrane bound fatty acid elongation system, which produces the 26-carbon very long-chain fatty acids (VLCFA) from palmitate. Catalyzes the reduction of the 3-ketoacyl-CoA intermediate that is formed in each cycle of fatty acid elongation. VLCFAs serve as precursors for ceramide and sphingolipids. This chain is Very-long-chain 3-oxoacyl-CoA reductase, found in Aspergillus oryzae (strain ATCC 42149 / RIB 40) (Yellow koji mold).